We begin with the raw amino-acid sequence, 152 residues long: Catabolic 3-dehydroquinase (152 aa).

Catalysis depends on Tyr-24, which acts as the Proton acceptor. Residues Asn-75, His-81, and Asp-88 each contribute to the substrate site. The active-site Proton donor is His-101. Substrate-binding positions include 102–103 (IS) and Arg-112.

It belongs to the type-II 3-dehydroquinase family. In terms of assembly, homododecamer. Adopts a ring-like structure, composed of an arrangement of two hexameric rings stacked on top of one another.

It catalyses the reaction 3-dehydroquinate = 3-dehydroshikimate + H2O. The protein operates within aromatic compound metabolism; 3,4-dihydroxybenzoate biosynthesis; 3,4-dihydroxybenzoate from 3-dehydroquinate: step 1/2. In terms of biological role, is involved in the catabolism of quinate. Allows the utilization of quinate as carbon source via the beta-ketoadipate pathway. The sequence is that of Catabolic 3-dehydroquinase from Phaeosphaeria nodorum (strain SN15 / ATCC MYA-4574 / FGSC 10173) (Glume blotch fungus).